The primary structure comprises 91 residues: Elongation factor 1-beta (91 aa).

The protein belongs to the EF-1-beta/EF-1-delta family.

Functionally, promotes the exchange of GDP for GTP in EF-1-alpha/GDP, thus allowing the regeneration of EF-1-alpha/GTP that could then be used to form the ternary complex EF-1-alpha/GTP/AAtRNA. This is Elongation factor 1-beta from Sulfurisphaera tokodaii (strain DSM 16993 / JCM 10545 / NBRC 100140 / 7) (Sulfolobus tokodaii).